We begin with the raw amino-acid sequence, 295 residues long: Protease HtpX (295 aa).

The next 2 helical transmembrane spans lie at 5–25 (VILF…SMRL) and 43–63 (ALLI…LAIS). His148 contributes to the Zn(2+) binding site. Glu149 is a catalytic residue. His152 contacts Zn(2+). The next 2 membrane-spanning stretches (helical) occupy residues 159–179 (VTLA…ARII) and 198–218 (FFIT…LIVL). Glu225 contributes to the Zn(2+) binding site.

It belongs to the peptidase M48B family. Requires Zn(2+) as cofactor.

It localises to the cell inner membrane. This Nitrosococcus oceani (strain ATCC 19707 / BCRC 17464 / JCM 30415 / NCIMB 11848 / C-107) protein is Protease HtpX.